Reading from the N-terminus, the 226-residue chain is MTKRAIVLLSGGLDSATVLAMAKAQGFETYALSMRYGQRHSSELDAAKQVASALGAVRHEIVDLDLRRFGGSALTDDKLDVPTGGASSGIPITYVPARNTIMLSLALGWAEAVGGRDLFFGANAVDYSGYPDCRPEYVAAYETLANLATKAGVEGDRFHVHAPIIDMTKAEIIRAGIRLGVDYSMTVSCYKADDDGRACGVCDSCRIRRAGFEAAGVPDPTRYQNA.

9-19 (LSGGLDSATVL) serves as a coordination point for ATP. Cys-189, Cys-199, Cys-202, and Cys-205 together coordinate Zn(2+).

Belongs to the QueC family. Requires Zn(2+) as cofactor.

The enzyme catalyses 7-carboxy-7-deazaguanine + NH4(+) + ATP = 7-cyano-7-deazaguanine + ADP + phosphate + H2O + H(+). Its pathway is purine metabolism; 7-cyano-7-deazaguanine biosynthesis. Functionally, catalyzes the ATP-dependent conversion of 7-carboxy-7-deazaguanine (CDG) to 7-cyano-7-deazaguanine (preQ(0)). This is 7-cyano-7-deazaguanine synthase from Cupriavidus pinatubonensis (strain JMP 134 / LMG 1197) (Cupriavidus necator (strain JMP 134)).